Reading from the N-terminus, the 90-residue chain is Antitoxin epsilon (90 aa).

It belongs to the epsilon antitoxin family. In terms of assembly, in the presence of the zeta toxin, forms an inactive PezA(2)PezT(2) heterotetramer. The heterotetramer is still able to bind the zeta toxin substrate UNAG.

Its function is as follows. Antitoxin component of a type II toxin-antitoxin (TA) system. Neutralizes the toxic effect of cognate zeta toxin. Part of a postsegregational killing (PSK) system involved in the killing of plasmid-free cells. Continuous synthesis of the epsilon antitoxin is required to counteract the zeta toxin. The protein is Antitoxin epsilon of Streptococcus pyogenes.